A 132-amino-acid polypeptide reads, in one-letter code: Small ribosomal subunit protein uS8 (132 aa).

The protein belongs to the universal ribosomal protein uS8 family. Part of the 30S ribosomal subunit. Contacts proteins S5 and S12.

Its function is as follows. One of the primary rRNA binding proteins, it binds directly to 16S rRNA central domain where it helps coordinate assembly of the platform of the 30S subunit. This chain is Small ribosomal subunit protein uS8, found in Staphylococcus epidermidis (strain ATCC 35984 / DSM 28319 / BCRC 17069 / CCUG 31568 / BM 3577 / RP62A).